Reading from the N-terminus, the 77-residue chain is Sec-independent protein translocase protein TatA (77 aa).

A helical transmembrane segment spans residues 1-21 (MGSFSIWHWLVVLAIVVLVFG). A disordered region spans residues 40–77 (KEGMKGAEEENTQPPPSHQQVTGHSIKSEIEEKDQTKV). The span at 65–77 (IKSEIEEKDQTKV) shows a compositional bias: basic and acidic residues.

Belongs to the TatA/E family. In terms of assembly, the Tat system comprises two distinct complexes: a TatABC complex, containing multiple copies of TatA, TatB and TatC subunits, and a separate TatA complex, containing only TatA subunits. Substrates initially bind to the TatABC complex, which probably triggers association of the separate TatA complex to form the active translocon.

It localises to the cell inner membrane. Functionally, part of the twin-arginine translocation (Tat) system that transports large folded proteins containing a characteristic twin-arginine motif in their signal peptide across membranes. TatA could form the protein-conducting channel of the Tat system. This chain is Sec-independent protein translocase protein TatA, found in Nitrosomonas eutropha (strain DSM 101675 / C91 / Nm57).